Reading from the N-terminus, the 630-residue chain is PAN2-PAN3 deadenylation complex subunit PAN3 (630 aa).

The C3H1-type zinc-finger motif lies at 7-36; it reads SAKDTLCKNILIYGYCKFENKGCAFSHHKP. 2 disordered regions span residues 38–72 and 135–171; these read VGQPPVSASSSSGYSGNSSPAEAKRKFNLNTPSFQ and GFGSEYPSSPNTSGAGQPPNPYLTGNGHPASMAQSSG. The segment covering 44-56 has biased composition (low complexity); it reads SASSSSGYSGNSS. Residues 140-149 are compositionally biased toward polar residues; sequence YPSSPNTSGA. The pseudokinase domain stretch occupies residues 231–501; sequence QTLPRSNLPE…LDRFSQRYLT (271 aa). ATP is bound by residues Arg283, 333 to 340, and 388 to 389; these read DYFPNSST and TK. Positions 502-540 form a coiled coil; sequence TRLFSTINNLEDSTDFMESQITTELENARLFRLLTKLNF. The segment at 541 to 630 is knob domain; it reads IIDRPEAKDW…DSVFRNLTRD (90 aa).

It belongs to the protein kinase superfamily. PAN3 family. As to quaternary structure, homodimer. Forms a heterotrimer with a catalytic subunit PAN2 to form the poly(A)-nuclease (PAN) deadenylation complex. Interacts (via PAM-2 motif) with poly(A)-binding protein PAB1 (via PABC domain), conferring substrate specificity of the enzyme complex.

The protein resides in the cytoplasm. Regulatory subunit of the poly(A)-nuclease (PAN) deadenylation complex, one of two cytoplasmic mRNA deadenylases involved in mRNA turnover. PAN specifically shortens poly(A) tails of RNA and the activity is stimulated by poly(A)-binding protein PAB1. PAN deadenylation is followed by rapid degradation of the shortened mRNA tails by the CCR4-NOT complex. Deadenylated mRNAs are then degraded by two alternative mechanisms, namely exosome-mediated 3'-5' exonucleolytic degradation, or deadenylation-dependent mRNA decaping and subsequent 5'-3' exonucleolytic degradation by XRN1. May also be involved in post-transcriptional maturation of mRNA poly(A) tails. PAN3 acts as a positive regulator for PAN activity, recruiting the catalytic subunit PAN2 to mRNA via its interaction with RNA and with PAB1. This Scheffersomyces stipitis (strain ATCC 58785 / CBS 6054 / NBRC 10063 / NRRL Y-11545) (Yeast) protein is PAN2-PAN3 deadenylation complex subunit PAN3.